We begin with the raw amino-acid sequence, 275 residues long: Anthracycline biosynthesis protein DnrV (275 aa).

VOC domains are found at residues 8–136 and 150–263; these read APAW…VWRK and SVGW…VVEL.

Its pathway is antibiotic biosynthesis; daunorubicin biosynthesis. It participates in antibiotic biosynthesis; carminomycin biosynthesis. Involved in the biosynthesis of the anthracyclines carminomycin and daunorubicin (daunomycin) which are aromatic polyketide antibiotics that exhibit high cytotoxicity and are widely applied in the chemotherapy of a variety of cancers. In vivo, it acts jointly with DoxA in the conversion of 13-deoxycarminomycin and 13-deoxydaunorubicin to yield carminomycin and daunorubicin, respectively. In vitro, it also acts jointly with DoxA in the C-14 hydroxylation of daunorubicin to form doxorubicin, although this strain is not a doxorubicin producer. This is Anthracycline biosynthesis protein DnrV (dnrV) from Streptomyces peucetius.